The following is a 70-amino-acid chain: MPREIKDIKDFLLKARRKDAKSVEIKKNPENVKFKVRCSRFLYTLVITDKEKAEKLKQSLPPGLQVKEVK.

The protein belongs to the eukaryotic ribosomal protein eL38 family.

The polypeptide is Large ribosomal subunit protein eL38 (RpL38) (Lonomia obliqua (Moth)).